We begin with the raw amino-acid sequence, 269 residues long: NAD kinase (269 aa).

Catalysis depends on Asp-45, which acts as the Proton acceptor. Residues 45 to 46 (DG), 122 to 123 (NE), Arg-149, Asp-151, and Ala-186 contribute to the NAD(+) site.

The protein belongs to the NAD kinase family. It depends on a divalent metal cation as a cofactor.

It localises to the cytoplasm. The catalysed reaction is NAD(+) + ATP = ADP + NADP(+) + H(+). Functionally, involved in the regulation of the intracellular balance of NAD and NADP, and is a key enzyme in the biosynthesis of NADP. Catalyzes specifically the phosphorylation on 2'-hydroxyl of the adenosine moiety of NAD to yield NADP. In Staphylococcus aureus (strain Mu3 / ATCC 700698), this protein is NAD kinase.